Reading from the N-terminus, the 209-residue chain is MRIGILGGTFDPIHFGHIRPAQEVKQTLNLDKVWLMPNHIPPHKTSTSVSTEQRLEMTQLVCDEYSEFELCAIEAKREAPSYLVTTLKQITNSHPNDEFFFIMGMDSLLSLDTWFEWQSLFGLCHIVVCQRPGWSLSPDSSIFSQYQSRVRSPNKITGKQSGLIIPIPVTPQAISSTHIREQLSEGITPTNALPDKIIQYIEDKNLYRT.

It belongs to the NadD family.

The catalysed reaction is nicotinate beta-D-ribonucleotide + ATP + H(+) = deamido-NAD(+) + diphosphate. It participates in cofactor biosynthesis; NAD(+) biosynthesis; deamido-NAD(+) from nicotinate D-ribonucleotide: step 1/1. Functionally, catalyzes the reversible adenylation of nicotinate mononucleotide (NaMN) to nicotinic acid adenine dinucleotide (NaAD). The protein is Probable nicotinate-nucleotide adenylyltransferase of Shewanella woodyi (strain ATCC 51908 / MS32).